A 354-amino-acid chain; its full sequence is Holliday junction branch migration complex subunit RuvB (354 aa).

The tract at residues 1-183 (MTGDNLVSAY…FGFVAHLDFY (183 aa)) is large ATPase domain (RuvB-L). Residues Arg-23, Gly-64, Lys-67, Thr-68, Ser-69, 130–132 (EDF), Arg-173, Tyr-183, and Arg-220 contribute to the ATP site. Thr-68 provides a ligand contact to Mg(2+). Residues 184–254 (SPADLETLLN…TAQAALTVYD (71 aa)) are small ATPAse domain (RuvB-S). The head domain (RuvB-H) stretch occupies residues 257–354 (ALGLDRLDRA…DLFSVEPDQP (98 aa)). Residues Arg-312 and Arg-317 each contribute to the DNA site.

It belongs to the RuvB family. As to quaternary structure, homohexamer. Forms an RuvA(8)-RuvB(12)-Holliday junction (HJ) complex. HJ DNA is sandwiched between 2 RuvA tetramers; dsDNA enters through RuvA and exits via RuvB. An RuvB hexamer assembles on each DNA strand where it exits the tetramer. Each RuvB hexamer is contacted by two RuvA subunits (via domain III) on 2 adjacent RuvB subunits; this complex drives branch migration. In the full resolvosome a probable DNA-RuvA(4)-RuvB(12)-RuvC(2) complex forms which resolves the HJ.

The protein resides in the cytoplasm. The catalysed reaction is ATP + H2O = ADP + phosphate + H(+). Its function is as follows. The RuvA-RuvB-RuvC complex processes Holliday junction (HJ) DNA during genetic recombination and DNA repair, while the RuvA-RuvB complex plays an important role in the rescue of blocked DNA replication forks via replication fork reversal (RFR). RuvA specifically binds to HJ cruciform DNA, conferring on it an open structure. The RuvB hexamer acts as an ATP-dependent pump, pulling dsDNA into and through the RuvAB complex. RuvB forms 2 homohexamers on either side of HJ DNA bound by 1 or 2 RuvA tetramers; 4 subunits per hexamer contact DNA at a time. Coordinated motions by a converter formed by DNA-disengaged RuvB subunits stimulates ATP hydrolysis and nucleotide exchange. Immobilization of the converter enables RuvB to convert the ATP-contained energy into a lever motion, pulling 2 nucleotides of DNA out of the RuvA tetramer per ATP hydrolyzed, thus driving DNA branch migration. The RuvB motors rotate together with the DNA substrate, which together with the progressing nucleotide cycle form the mechanistic basis for DNA recombination by continuous HJ branch migration. Branch migration allows RuvC to scan DNA until it finds its consensus sequence, where it cleaves and resolves cruciform DNA. The sequence is that of Holliday junction branch migration complex subunit RuvB from Salinispora tropica (strain ATCC BAA-916 / DSM 44818 / JCM 13857 / NBRC 105044 / CNB-440).